A 93-amino-acid polypeptide reads, in one-letter code: Defensin-like protein 210 (93 aa).

An N-terminal signal peptide occupies residues 1–19 (MKTIILFLTLLVISSSCTS). Cystine bridges form between Cys63–Cys80, Cys66–Cys85, and Cys70–Cys87.

The protein belongs to the DEFL family.

The protein localises to the secreted. The chain is Defensin-like protein 210 from Arabidopsis thaliana (Mouse-ear cress).